The sequence spans 134 residues: Large-conductance mechanosensitive channel (134 aa).

The next 2 helical transmembrane spans lie at 16–36 (VIDLAVGVVIGAAFGKIVTAL) and 84–104 (INTLIQFVIVAFAIFLVIKVI).

It belongs to the MscL family. As to quaternary structure, homopentamer.

The protein resides in the cell inner membrane. Its function is as follows. Channel that opens in response to stretch forces in the membrane lipid bilayer. May participate in the regulation of osmotic pressure changes within the cell. The chain is Large-conductance mechanosensitive channel from Stenotrophomonas maltophilia (strain R551-3).